A 564-amino-acid chain; its full sequence is Laccase-22 (564 aa).

The signal sequence occupies residues M1–S25. Plastocyanin-like domains follow at residues N36–G152 and K162–T314. Residues N41 and N82 are each glycosylated (N-linked (GlcNAc...) asparagine). Cu cation contacts are provided by H86 and H88. N-linked (GlcNAc...) asparagine glycosylation occurs at N118. The Cu cation site is built by H131 and H133. N-linked (GlcNAc...) asparagine glycosylation is found at N191, N302, N331, N379, N389, N424, N437, and N447. Residues D414–K548 form the Plastocyanin-like 3 domain. Positions 465, 468, 470, 527, 528, 529, and 533 each coordinate Cu cation.

Belongs to the multicopper oxidase family. It depends on Cu cation as a cofactor.

Its subcellular location is the secreted. The protein localises to the extracellular space. It localises to the apoplast. It catalyses the reaction 4 hydroquinone + O2 = 4 benzosemiquinone + 2 H2O. In terms of biological role, lignin degradation and detoxification of lignin-derived products. This chain is Laccase-22 (LAC22), found in Oryza sativa subsp. japonica (Rice).